The chain runs to 697 residues: MSMFNIIRKEFQFGQHQVVLETGRVARQANTVLVTMGGVTVLVAVVAQPKAKAGQDFFPLTVNYQEKQYAAGRIPGGYGKREGRASEAETLISRLIDRPIRPLFPEGYFNEIQITATVVSSDKTMDADIAAMLGASAALSIAGTPFRGPIGGARVGLINGEYVLNPNFEQLAQSDLDLVVAGTESAVLMVESEAKELSEDQMLGAVLFGHDEMQIAVQAIKEFAAAAGAVESTWVAPTKNETLLEQLKAAFEAKISEAYTIAVKQDRYTALDALYAEAVAQFVPENDETGIADEVNELFEDLKYRTVRDNILSGKPRIDGRDTKTVRAIDVQVGVLDRAHGSALFTRGETQALVTTTLGNTRDALMVDTLAGTKTDNFMLHYNFPAYSVGETGRESGPKRREIGHGRLARRGVQAVLPAADRFPYVIRIVSDITESNGSSSMASVCGASLSLMDAGVPLKAPVAGIAMGLVKEGERFAVLSDILGDEDHLGDMDFKVAGSANGITALQMDIKIEGITEEIMEVALNQAYAGRMHILNEMNKVISRARAEISAHAPTFEVITINPDKIRDVIGKGGATIRQITEETKAAIDIEDNGTVRVFGETKAAARAAIAKIQALTAEVEPGKIYDGKVIRIVEFGAFVNIMPGTDGLLHISQISNERVANVSDVLKEGQDVKVQVADVDNRGRIKLSMKDIEQA.

Mg(2+)-binding residues include Asp-488 and Asp-494. One can recognise a KH domain in the interval 555–614 (PTFEVITINPDKIRDVIGKGGATIRQITEETKAAIDIEDNGTVRVFGETKAAARAAIAKI). In terms of domain architecture, S1 motif spans 624-692 (GKIYDGKVIR…NRGRIKLSMK (69 aa)).

The protein belongs to the polyribonucleotide nucleotidyltransferase family. Component of the RNA degradosome, which is a multiprotein complex involved in RNA processing and mRNA degradation. It depends on Mg(2+) as a cofactor.

Its subcellular location is the cytoplasm. It carries out the reaction RNA(n+1) + phosphate = RNA(n) + a ribonucleoside 5'-diphosphate. Functionally, involved in mRNA degradation. Catalyzes the phosphorolysis of single-stranded polyribonucleotides processively in the 3'- to 5'-direction. The protein is Polyribonucleotide nucleotidyltransferase of Acinetobacter baylyi (strain ATCC 33305 / BD413 / ADP1).